A 197-amino-acid chain; its full sequence is Phosphoheptose isomerase (197 aa).

The region spanning 36 to 197 (MVNALLNEGK…IDSQLFGSEE (162 aa)) is the SIS domain. 51-53 (NGG) contributes to the substrate binding site. His60 and Glu64 together coordinate Zn(2+). Residues Glu64, 93–94 (ND), 119–121 (STS), Ser124, and Gln174 each bind substrate. Residues Gln174 and His182 each contribute to the Zn(2+) site.

This sequence belongs to the SIS family. GmhA subfamily. Homotetramer. Zn(2+) is required as a cofactor.

The protein localises to the cytoplasm. The catalysed reaction is 2 D-sedoheptulose 7-phosphate = D-glycero-alpha-D-manno-heptose 7-phosphate + D-glycero-beta-D-manno-heptose 7-phosphate. It functions in the pathway carbohydrate biosynthesis; D-glycero-D-manno-heptose 7-phosphate biosynthesis; D-glycero-alpha-D-manno-heptose 7-phosphate and D-glycero-beta-D-manno-heptose 7-phosphate from sedoheptulose 7-phosphate: step 1/1. In terms of biological role, catalyzes the isomerization of sedoheptulose 7-phosphate in D-glycero-D-manno-heptose 7-phosphate. This is Phosphoheptose isomerase from Pseudomonas putida (strain W619).